Consider the following 355-residue polypeptide: Alanine racemase (355 aa).

Lysine 37 serves as the catalytic Proton acceptor; specific for D-alanine. An N6-(pyridoxal phosphate)lysine modification is found at lysine 37. Arginine 129 lines the substrate pocket. Tyrosine 251 acts as the Proton acceptor; specific for L-alanine in catalysis. A substrate-binding site is contributed by methionine 299.

The protein belongs to the alanine racemase family. The cofactor is pyridoxal 5'-phosphate.

It carries out the reaction L-alanine = D-alanine. It participates in amino-acid biosynthesis; D-alanine biosynthesis; D-alanine from L-alanine: step 1/1. Its function is as follows. Catalyzes the interconversion of L-alanine and D-alanine. May also act on other amino acids. This chain is Alanine racemase (alr), found in Deinococcus geothermalis (strain DSM 11300 / CIP 105573 / AG-3a).